Here is a 260-residue protein sequence, read N- to C-terminus: Adenosylcobinamide-GDP ribazoletransferase (260 aa).

A run of 6 helical transmembrane segments spans residues 7-27 (WYFL…TRLP), 45-65 (LMGL…HWLG), 117-137 (AYGV…LASF), 145-165 (WALI…IALY), 187-207 (LLLG…ALAI), and 210-230 (WLIL…GRWF).

Belongs to the CobS family. It depends on Mg(2+) as a cofactor.

The protein resides in the cell inner membrane. It catalyses the reaction alpha-ribazole + adenosylcob(III)inamide-GDP = adenosylcob(III)alamin + GMP + H(+). The enzyme catalyses alpha-ribazole 5'-phosphate + adenosylcob(III)inamide-GDP = adenosylcob(III)alamin 5'-phosphate + GMP + H(+). It participates in cofactor biosynthesis; adenosylcobalamin biosynthesis; adenosylcobalamin from cob(II)yrinate a,c-diamide: step 7/7. Functionally, joins adenosylcobinamide-GDP and alpha-ribazole to generate adenosylcobalamin (Ado-cobalamin). Also synthesizes adenosylcobalamin 5'-phosphate from adenosylcobinamide-GDP and alpha-ribazole 5'-phosphate. This is Adenosylcobinamide-GDP ribazoletransferase from Synechocystis sp. (strain ATCC 27184 / PCC 6803 / Kazusa).